We begin with the raw amino-acid sequence, 970 residues long: uncharacterized protein (970 aa).

The disordered stretch occupies residues 942–970 (QLSFEEDGWTESEPRPVRREAHVRAKERH). Residues 953 to 970 (SEPRPVRREAHVRAKERH) show a composition bias toward basic and acidic residues.

This is an uncharacterized protein from Frog virus 3 (isolate Goorha) (FV-3).